We begin with the raw amino-acid sequence, 144 residues long: MKFKYIVAVSFLIASAYARSEENDEQSLSQRDVLEEESLREIRGIGTKILGGLKTAVKGALKELASTYVNGKRTAEDHEVMKRLEAVMRDLDSLDYPEEASERETRGFNQEEIANLFTKKEKRILGPVIKTIGGVIGGLLKNLG.

An N-terminal signal peptide occupies residues 1–18; that stretch reads MKFKYIVAVSFLIASAYA. Positions 19 to 43 are excised as a propeptide; the sequence is RSEENDEQSLSQRDVLEEESLREIR. Asn70 is subject to Asparagine amide. Positions 74–123 are excised as a propeptide; that stretch reads TAEDHEVMKRLEAVMRDLDSLDYPEEASERETRGFNQEEIANLFTKKEKR. Leu143 bears the Leucine amide mark.

Belongs to the bombinin family. In terms of tissue distribution, expressed by the skin glands.

The protein resides in the secreted. Functionally, maximin-8 shows antimicrobial activity against bacteria and against the fungus C.albicans. It has little hemolytic activity. In terms of biological role, maximin-H7 shows antimicrobial activity against bacteria and against the fungus C.albicans. Shows strong hemolytic activity. This Bombina maxima (Giant fire-bellied toad) protein is Maximins 8/H7.